The primary structure comprises 225 residues: Cytidylate kinase (225 aa).

12-20 (GPSGAGKGT) contributes to the ATP binding site.

It belongs to the cytidylate kinase family. Type 1 subfamily.

It localises to the cytoplasm. The enzyme catalyses CMP + ATP = CDP + ADP. It catalyses the reaction dCMP + ATP = dCDP + ADP. This chain is Cytidylate kinase, found in Stenotrophomonas maltophilia (strain K279a).